A 215-amino-acid polypeptide reads, in one-letter code: 3-demethoxyubiquinol 3-hydroxylase (215 aa).

Residues glutamate 64, glutamate 94, histidine 97, glutamate 146, glutamate 178, and histidine 181 each contribute to the Fe cation site.

The protein belongs to the COQ7 family. It depends on Fe cation as a cofactor.

Its subcellular location is the cell membrane. It catalyses the reaction a 5-methoxy-2-methyl-3-(all-trans-polyprenyl)benzene-1,4-diol + AH2 + O2 = a 3-demethylubiquinol + A + H2O. It functions in the pathway cofactor biosynthesis; ubiquinone biosynthesis. Its function is as follows. Catalyzes the hydroxylation of 2-nonaprenyl-3-methyl-6-methoxy-1,4-benzoquinol during ubiquinone biosynthesis. The chain is 3-demethoxyubiquinol 3-hydroxylase from Pseudomonas paraeruginosa (strain DSM 24068 / PA7) (Pseudomonas aeruginosa (strain PA7)).